Consider the following 474-residue polypeptide: GTPase Der (474 aa).

EngA-type G domains are found at residues 3 to 167 (FTVA…GVDR) and 204 to 379 (LRVA…MVWN). Residues 9–16 (GRPNVGKS), 56–60 (DTAGL), 119–122 (NKSE), 210–217 (GRPNAGKS), 257–261 (DTAGM), and 322–325 (NKWD) contribute to the GTP site. Positions 380 to 464 (KRISTAKLNR…PIRIHLKASE (85 aa)) constitute a KH-like domain.

Belongs to the TRAFAC class TrmE-Era-EngA-EngB-Septin-like GTPase superfamily. EngA (Der) GTPase family. As to quaternary structure, associates with the 50S ribosomal subunit.

In terms of biological role, GTPase that plays an essential role in the late steps of ribosome biogenesis. This is GTPase Der from Allorhizobium ampelinum (strain ATCC BAA-846 / DSM 112012 / S4) (Agrobacterium vitis (strain S4)).